A 384-amino-acid polypeptide reads, in one-letter code: BarH-like 2 homeobox protein (384 aa).

3 disordered regions span residues 1-134, 154-237, and 364-384; these read MTAM…APRT, CAPY…TAFS, and PGGQ…PHPR. The segment covering 119-134 has biased composition (low complexity); sequence QSAAQQLGSAAAAPRT. Over residues 177–217 the composition is skewed to basic and acidic residues; that stretch reads ESFRPKLEQEDSKTKLDKREDSQSDIKCHGTKEEGDREITS. The segment at residues 229–288 is a DNA-binding region (homeobox); it reads PRKARTAFSDHQLNQLERSFERQKYLSVQDRMDLAAALNLTDTQVKTWYQNRRTKWKRQT.

Belongs to the BAR homeobox family. As to expression, expressed in the ganglion cell layer of the retina in the eye and in the ventral zone of the dorsal thalamus of the CNS.

Its subcellular location is the nucleus. Its function is as follows. Potential regulator of neural basic helix-loop-helix genes. It may down-regulate expression of ASCL1 and, within the thalamus, up-regulate NGN2, thereby regulating distinct patterns of neuronal differentiation. The sequence is that of BarH-like 2 homeobox protein (Barhl2) from Rattus norvegicus (Rat).